The chain runs to 607 residues: Siderophore iron transporter mirC (607 aa).

The next 12 membrane-spanning stretches (helical) occupy residues Leu67–Met89, Val129–Ile148, Ser186–Gly208, Trp223–Leu245, Ile279–Asn301, Ile311–Trp328, Thr349–Val368, Gly388–Lys410, Val417–Tyr436, Val446–Val468, Thr481–Trp503, and Leu557–Leu574. The segment covering Ser584–Ser593 has biased composition (basic and acidic residues). Residues Ser584–Thr607 are disordered.

The protein belongs to the major facilitator superfamily.

The protein resides in the membrane. In Emericella nidulans (strain FGSC A4 / ATCC 38163 / CBS 112.46 / NRRL 194 / M139) (Aspergillus nidulans), this protein is Siderophore iron transporter mirC (mirC).